A 245-amino-acid chain; its full sequence is DNA repair protein RecO (245 aa).

This sequence belongs to the RecO family.

Its function is as follows. Involved in DNA repair and RecF pathway recombination. This Klebsiella pneumoniae subsp. pneumoniae (strain ATCC 700721 / MGH 78578) protein is DNA repair protein RecO.